The primary structure comprises 29 residues: RGCPRILMRCKRDSDCLAGCVCQKNGYCG.

Intrachain disulfides connect Cys-3/Cys-20, Cys-10/Cys-22, and Cys-16/Cys-28.

This sequence belongs to the protease inhibitor I7 (squash-type serine protease inhibitor) family.

It is found in the secreted. Functionally, inhibits trypsin. In Bryonia dioica (Red bryony), this protein is Trypsin inhibitor 2.